Here is a 104-residue protein sequence, read N- to C-terminus: NADH-quinone oxidoreductase subunit K (104 aa).

3 helical membrane-spanning segments follow: residues Val4 to Ala24, Val31 to Phe51, and Leu67 to Leu87.

Belongs to the complex I subunit 4L family. As to quaternary structure, NDH-1 is composed of 14 different subunits. Subunits NuoA, H, J, K, L, M, N constitute the membrane sector of the complex.

It is found in the cell membrane. The enzyme catalyses a quinone + NADH + 5 H(+)(in) = a quinol + NAD(+) + 4 H(+)(out). NDH-1 shuttles electrons from NADH, via FMN and iron-sulfur (Fe-S) centers, to quinones in the respiratory chain. The immediate electron acceptor for the enzyme in this species is believed to be a menaquinone. Couples the redox reaction to proton translocation (for every two electrons transferred, four hydrogen ions are translocated across the cytoplasmic membrane), and thus conserves the redox energy in a proton gradient. The sequence is that of NADH-quinone oxidoreductase subunit K from Bacillus cereus (strain ATCC 14579 / DSM 31 / CCUG 7414 / JCM 2152 / NBRC 15305 / NCIMB 9373 / NCTC 2599 / NRRL B-3711).